A 506-amino-acid chain; its full sequence is Maturase K (506 aa).

The protein belongs to the intron maturase 2 family. MatK subfamily.

It is found in the plastid. Its subcellular location is the chloroplast. Functionally, usually encoded in the trnK tRNA gene intron. Probably assists in splicing its own and other chloroplast group II introns. The sequence is that of Maturase K from Rhododendron ferrugineum (Alpenrose).